The following is a 108-amino-acid chain: U-scoloptoxin(16)-Er10a (108 aa).

A signal peptide spans 1-24; sequence MASFTSFCVLFTFCLLLLAHQARS.

Belongs to the scoloptoxin-16 family. Post-translationally, contains 4 disulfide bonds. In terms of tissue distribution, expressed by the venom gland.

The protein resides in the secreted. This Ethmostigmus rubripes (Giant centipede) protein is U-scoloptoxin(16)-Er10a.